The sequence spans 312 residues: Uracil-DNA glycosylase (312 aa).

Residues 1 to 11 (MSSACDHETEA) show a composition bias toward basic and acidic residues. The tract at residues 1 to 61 (MSSACDHETE…PPKRRRPCGL (61 aa)) is disordered. A compositionally biased stretch (polar residues) spans 22–33 (EENGSNSSTPTS). Residue Asp155 is the Proton acceptor of the active site.

The protein belongs to the uracil-DNA glycosylase (UDG) superfamily. UNG family.

It is found in the host nucleus. The enzyme catalyses Hydrolyzes single-stranded DNA or mismatched double-stranded DNA and polynucleotides, releasing free uracil.. Functionally, excises uracil residues from the DNA which can arise as a result of misincorporation of dUMP residues by DNA polymerase or deamination of cytosines. Therefore may reduce deleterious uracil incorporation into the viral genome, particularly in terminally differentiated cells which lack DNA repair enzymes. This is Uracil-DNA glycosylase (61) from Equine herpesvirus 1 (strain V592) (EHV-1).